The chain runs to 190 residues: UPF0301 protein Reut_A0705 (190 aa).

Belongs to the UPF0301 (AlgH) family.

The sequence is that of UPF0301 protein Reut_A0705 from Cupriavidus pinatubonensis (strain JMP 134 / LMG 1197) (Cupriavidus necator (strain JMP 134)).